Reading from the N-terminus, the 447-residue chain is UDP-N-acetylglucosamine 1-carboxyvinyltransferase (447 aa).

Phosphoenolpyruvate is bound at residue 27 to 28 (KN). Arginine 97 provides a ligand contact to UDP-N-acetyl-alpha-D-glucosamine. The Proton donor role is filled by cysteine 121. Position 121 is a 2-(S-cysteinyl)pyruvic acid O-phosphothioketal (cysteine 121). UDP-N-acetyl-alpha-D-glucosamine is bound by residues 126 to 130 (RPVDL), aspartate 314, and valine 336.

This sequence belongs to the EPSP synthase family. MurA subfamily.

Its subcellular location is the cytoplasm. It catalyses the reaction phosphoenolpyruvate + UDP-N-acetyl-alpha-D-glucosamine = UDP-N-acetyl-3-O-(1-carboxyvinyl)-alpha-D-glucosamine + phosphate. It participates in cell wall biogenesis; peptidoglycan biosynthesis. In terms of biological role, cell wall formation. Adds enolpyruvyl to UDP-N-acetylglucosamine. The polypeptide is UDP-N-acetylglucosamine 1-carboxyvinyltransferase (Nostoc sp. (strain PCC 7120 / SAG 25.82 / UTEX 2576)).